Consider the following 361-residue polypeptide: Dual specificity mitogen-activated protein kinase kinase 6 (361 aa).

2 stretches are compositionally biased toward basic and acidic residues: residues 1–11 (MEGGSDKESKV) and 37–48 (PKELKLPKEVFE). Residues 1 to 61 (MEGGSDKESK…PAPTPPRDLD (61 aa)) form a disordered region. The d domain stretch occupies residues 30-46 (VRGKKKLPKELKLPKEV). A Protein kinase domain is found at 80–341 (LEQIGELGRG…YTELMQHPFF (262 aa)). ATP-binding positions include 86–94 (LGRGAYGVV) and Lys109. The active-site Proton acceptor is Asp206. Ser234 is modified (phosphoserine; by MAPK3). Thr238 carries the phosphothreonine; by MAPK3 modification. The DVD domain stretch occupies residues 338-361 (HPFFTLHDSKDTDVASFVKTILGD).

It belongs to the protein kinase superfamily. STE Ser/Thr protein kinase family. MAP kinase kinase subfamily. In terms of assembly, dimer. Interacts (via its D domain) with its MAP kinase substrates. Interacts (via its DVD domain) with MAP3Ks activators. Post-translationally, weakly autophosphorylated. Phosphorylated at Ser-234 and Thr-238 by the majority of M3Ks.

The protein resides in the nucleus. It localises to the cytoplasm. It is found in the cytoskeleton. The catalysed reaction is L-seryl-[protein] + ATP = O-phospho-L-seryl-[protein] + ADP + H(+). It carries out the reaction L-threonyl-[protein] + ATP = O-phospho-L-threonyl-[protein] + ADP + H(+). It catalyses the reaction L-tyrosyl-[protein] + ATP = O-phospho-L-tyrosyl-[protein] + ADP + H(+). Activated by dual phosphorylation on Ser-234 and Thr-238 in response to a variety of cellular stresses, including UV radiation, osmotic shock, hypoxia, inflammatory cytokines, interferon gamma (IFNG), and less often by growth factors. MAP2K6/MKK6 is activated by the majority of M3Ks. In terms of biological role, dual specificity protein kinase which acts as an essential component of the MAP kinase signal transduction pathway. Catalyzes the concomitant phosphorylation of a threonine and a tyrosine residue in the MAP kinases p38 and plays an important role in the regulation of cellular responses to cytokines and all kinds of stresses. The p38 MAP kinase signal transduction pathway leads to direct activation of transcription factors. Phosphorylation by MAP2K6 asymmetrically activates p38 on one side of the blastodisc, an event which is necessary for blastomere cleavage. The polypeptide is Dual specificity mitogen-activated protein kinase kinase 6 (Danio rerio (Zebrafish)).